A 283-amino-acid chain; its full sequence is Ribosomal RNA small subunit methyltransferase A (283 aa).

The S-adenosyl-L-methionine site is built by N13, L15, G39, E59, D87, and N108.

It belongs to the class I-like SAM-binding methyltransferase superfamily. rRNA adenine N(6)-methyltransferase family. RsmA subfamily.

The protein localises to the cytoplasm. The catalysed reaction is adenosine(1518)/adenosine(1519) in 16S rRNA + 4 S-adenosyl-L-methionine = N(6)-dimethyladenosine(1518)/N(6)-dimethyladenosine(1519) in 16S rRNA + 4 S-adenosyl-L-homocysteine + 4 H(+). Its function is as follows. Specifically dimethylates two adjacent adenosines (A1518 and A1519) in the loop of a conserved hairpin near the 3'-end of 16S rRNA in the 30S particle. May play a critical role in biogenesis of 30S subunits. The chain is Ribosomal RNA small subunit methyltransferase A from Helicobacter hepaticus (strain ATCC 51449 / 3B1).